The primary structure comprises 415 residues: Small ribosomal subunit protein uS5m (415 aa).

Residues 1 to 31 (MRRSGPELWKTLTSVSKSGQKKGRRNTRQPV) form a disordered region. Positions 131–197 (FETYCLEVKR…GMASRKIFHV (67 aa)) constitute an S5 DRBM domain. The tract at residues 396-415 (GVEPMPLGIGLSHVVPKKDD) is disordered.

Belongs to the universal ribosomal protein uS5 family. Component of the mitochondrial ribosome small subunit (28S) which comprises a 12S rRNA and about 30 distinct proteins.

It is found in the mitochondrion. The protein is Small ribosomal subunit protein uS5m (mrps-5) of Caenorhabditis briggsae.